Here is a 486-residue protein sequence, read N- to C-terminus: Hematopoietic lineage cell-specific protein (486 aa).

The interval 27 to 66 (FVNDISEKEQRWGAKTIEGSGRTEHINIHQLRNKVSEEHD) is involved in HAX-1 binding. An N6-acetyllysine modification is found at lysine 41. Cortactin repeat units lie at residues 79–115 (ASHGYGGRFGVERDRMDKSAVGHEYVADVEKHSSQTD), 116–152 (AARGFGGKYGVERDRADKSAVGFDYKGEVEKHASQKD), and 153–189 (YSHGFGGRYGVEKDKRDKAALGYDYKGETEKHESQRD). Lysine 123 carries the N6-acetyllysine modification. At tyrosine 140 the chain carries Phosphotyrosine. A Cortactin 4; truncated repeat occupies 190–212 (YAKGFGGQYGIQKDRVDKSAVGF). The residue at position 192 (lysine 192) is an N6-acetyllysine. Tyrosine 198 bears the Phosphotyrosine mark. The residue at position 222 (tyrosine 222) is a Phosphotyrosine; by FGR. A disordered region spans residues 226-430 (TPIEAASSGA…AGPSAGAGGA (205 aa)). Composition is skewed to basic and acidic residues over residues 240-258 (AKFESLAEEKRKREEEEKA) and 265-276 (QQERKAVVKMSR). Lysine 241 is subject to N6-acetyllysine. At serine 275 the chain carries Phosphoserine. At threonine 330 the chain carries Phosphothreonine. At serine 333 the chain carries Phosphoserine. Residues 358–367 (VVEEPVYEAA) show a composition bias toward low complexity. Residues 368-413 (PELEPEPEPDYEPEPETEPDYEDVGELDRQDEDAEGDYEDVLEPED) show a composition bias toward acidic residues. 2 positions are modified to phosphotyrosine; by SYK and FES: tyrosine 388 and tyrosine 405. One can recognise an SH3 domain in the interval 429 to 486 (GAGISAIALYDYQGEGSDELSFDPDDIITDIEMVDEGWWRGQCRGHFGLFPANYVKLL).

As to quaternary structure, interacts (via SH2 domain) with FGR. Associates with the SH2 and SH3 domains of LCK. Binding to he LCK SH3 domain occurs constitutively, while binding to the LCK SH2 domain occurs only upon TCR stimulation. A similar binding pattern was observed with LYN, but not with FYN in which the FYN SH2 region associates upon TCR stimulation but the FYN SH3 region does not associate regardless of TCR stimulation. Directly associates with HAX1, through binding to its C-terminal region. Interacts with HS1BP3. Interacts with FES/FPS. Forms a multiprotein complex with LYN and ANKRD54. In terms of processing, phosphorylated by LYN, FYN and FGR after cross-linking of surface IgM on B-cells. Phosphorylation by LYN, FYN and FGR requires prior phosphorylation by SYK. Binds to LCK in vivo, and is tyrosine phosphorylated upon TCR stimulation. Phosphorylated by FES. Expressed only in tissues and cells of hematopoietic origin.

It is found in the mitochondrion. Substrate of the antigen receptor-coupled tyrosine kinase. Plays a role in antigen receptor signaling for both clonal expansion and deletion in lymphoid cells. May also be involved in the regulation of gene expression. In Mus musculus (Mouse), this protein is Hematopoietic lineage cell-specific protein (Hcls1).